The primary structure comprises 577 residues: Proline--tRNA ligase (577 aa).

Belongs to the class-II aminoacyl-tRNA synthetase family. ProS type 1 subfamily. In terms of assembly, homodimer.

The protein resides in the cytoplasm. It carries out the reaction tRNA(Pro) + L-proline + ATP = L-prolyl-tRNA(Pro) + AMP + diphosphate. Catalyzes the attachment of proline to tRNA(Pro) in a two-step reaction: proline is first activated by ATP to form Pro-AMP and then transferred to the acceptor end of tRNA(Pro). As ProRS can inadvertently accommodate and process non-cognate amino acids such as alanine and cysteine, to avoid such errors it has two additional distinct editing activities against alanine. One activity is designated as 'pretransfer' editing and involves the tRNA(Pro)-independent hydrolysis of activated Ala-AMP. The other activity is designated 'posttransfer' editing and involves deacylation of mischarged Ala-tRNA(Pro). The misacylated Cys-tRNA(Pro) is not edited by ProRS. The chain is Proline--tRNA ligase from Thermotoga neapolitana (strain ATCC 49049 / DSM 4359 / NBRC 107923 / NS-E).